We begin with the raw amino-acid sequence, 434 residues long: UPF0597 protein CLI_2075 (434 aa).

Belongs to the UPF0597 family.

The polypeptide is UPF0597 protein CLI_2075 (Clostridium botulinum (strain Langeland / NCTC 10281 / Type F)).